The chain runs to 542 residues: CTP synthase (542 aa).

The segment at 1–265 (MTRYIFVTGG…DQLVIERFGL (265 aa)) is amidoligase domain. Ser-13 serves as a coordination point for CTP. Ser-13 is a binding site for UTP. Residues 14–19 (SLGKGI) and Asp-71 contribute to the ATP site. Positions 71 and 139 each coordinate Mg(2+). Residues 146–148 (DIE), 186–191 (KTKPTQ), and Lys-222 contribute to the CTP site. Residues 186–191 (KTKPTQ) and Lys-222 each bind UTP. The region spanning 290–541 (TIAMVGKYME…VEAALANKKG (252 aa)) is the Glutamine amidotransferase type-1 domain. Gly-351 is a binding site for L-glutamine. Residue Cys-378 is the Nucleophile; for glutamine hydrolysis of the active site. Residues 379–382 (LGMQ), Glu-402, and Arg-469 contribute to the L-glutamine site. Residues His-514 and Glu-516 contribute to the active site.

It belongs to the CTP synthase family. Homotetramer.

It carries out the reaction UTP + L-glutamine + ATP + H2O = CTP + L-glutamate + ADP + phosphate + 2 H(+). It catalyses the reaction L-glutamine + H2O = L-glutamate + NH4(+). The enzyme catalyses UTP + NH4(+) + ATP = CTP + ADP + phosphate + 2 H(+). It participates in pyrimidine metabolism; CTP biosynthesis via de novo pathway; CTP from UDP: step 2/2. Its activity is regulated as follows. Allosterically activated by GTP, when glutamine is the substrate; GTP has no effect on the reaction when ammonia is the substrate. The allosteric effector GTP functions by stabilizing the protein conformation that binds the tetrahedral intermediate(s) formed during glutamine hydrolysis. Inhibited by the product CTP, via allosteric rather than competitive inhibition. Its function is as follows. Catalyzes the ATP-dependent amination of UTP to CTP with either L-glutamine or ammonia as the source of nitrogen. Regulates intracellular CTP levels through interactions with the four ribonucleotide triphosphates. This Marinobacter nauticus (strain ATCC 700491 / DSM 11845 / VT8) (Marinobacter aquaeolei) protein is CTP synthase.